Consider the following 262-residue polypeptide: Membrane protein US15 (262 aa).

Helical transmembrane passes span 46-66 (GAVGWQLAGLTALLSAFCYAA), 77-97 (CLTESSPSLVFVIPVTSVIFI), 108-128 (IGVLLFYTLLHVPPLIVICLC), 133-153 (LVISAALFTLLAFLSCTGVAL), 163-183 (QIVVIHALITLTFTAIVVVIL), 186-206 (GWSWCFKIVLSFSVLITCLAV), and 226-246 (LLAAVKVFLSLVFTLLMVLRI).

The protein belongs to the HHV-5 US12 protein family.

The protein resides in the host membrane. This chain is Membrane protein US15 (US15), found in Human cytomegalovirus (strain Merlin) (HHV-5).